A 229-amino-acid polypeptide reads, in one-letter code: Probable transmembrane reductase CYB561D1 (229 aa).

Topologically, residues 1–24 are cytoplasmic; sequence MHSMEVGLVPAPAREPRLTRWLRR. Residues 22–224 form the Cytochrome b561 domain; sequence LRRGSGILAH…HQISSSYLPR (203 aa). The chain crosses the membrane as a helical span at residues 25 to 45; sequence GSGILAHLIALGFTIFLTVLS. Residues 46-53 lie on the Lumenal side of the membrane; it reads RPGTSLFS. The helical transmembrane segment at 54-74 threads the bilayer; sequence WHPVFMALAFCLCMAEAILLF. Heme b is bound at residue His-55. Over 75–91 the chain is Cytoplasmic; the sequence is SPEHSLFFFCSRKTRIR. The chain crosses the membrane as a helical span at residues 92–112; the sequence is LHWAGQTMAILCAVLGLGFII. His-93 and His-127 together coordinate heme b. Residues 113–128 are Lumenal-facing; the sequence is SSKIRSEMSHLVSWHS. Residues 129–149 form a helical membrane-spanning segment; it reads WIGALTLLATGGQALCGLCLL. At 150-169 the chain is on the cytoplasmic side; that stretch reads CPRAARVSRVARLKLYHLTC. His-166 serves as a coordination point for heme b. Residues 170-190 form a helical membrane-spanning segment; that stretch reads GLVVYLMATVTVLLGMYSVWF. Over 191–193 the chain is Lumenal; the sequence is QAQ. Residues 194 to 214 traverse the membrane as a helical segment; the sequence is IKGTAWYLCLGLPLYPALVIM. Topologically, residues 215–229 are cytoplasmic; sequence HQISSSYLPRKKVEI.

Heme b serves as cofactor.

Its subcellular location is the membrane. It carries out the reaction monodehydro-L-ascorbate radical(out) + L-ascorbate(in) = monodehydro-L-ascorbate radical(in) + L-ascorbate(out). The catalysed reaction is Fe(3+)(out) + L-ascorbate(in) = monodehydro-L-ascorbate radical(in) + Fe(2+)(out) + H(+). Functionally, probable transmembrane reductase that may use ascorbate as an electron donor and transfer electrons across membranes to reduce monodehydro-L-ascorbate radical and iron cations Fe(3+) in another cellular compartment. This Mus musculus (Mouse) protein is Probable transmembrane reductase CYB561D1.